We begin with the raw amino-acid sequence, 641 residues long: E3 ubiquitin-protein ligase TRIM47 (641 aa).

The RING-type zinc finger occupies 9–58 (CPICLEPLREPVTLPCGHNFCLACLGALWPHRSAGGTGGSGGPARCPLCQ). The residue at position 72 (threonine 72) is a Phosphothreonine. The tract at residues 81-123 (QGSVPGPMSAPASGSTRGATPEPSAPSAPPPAPEPSAPCAPEQ) is disordered. Positions 103–118 (PSAPSAPPPAPEPSAP) are enriched in pro residues. The segment at 181–221 (LEESLCPRHLRPLERYCRVERVCLCEACATQDHRGHELVPL) adopts a B box-type zinc-finger fold. Residues cysteine 186, histidine 189, cysteine 208, and histidine 213 each coordinate Zn(2+). Positions 305–325 (QGDLRRQEEQRSRLSKARHNL) form a coiled coil. Phosphoserine is present on serine 393. A disordered region spans residues 396–416 (DGLQKLGSEDVESQDPDSTSL). Residues 413 to 634 (STSLLESEAP…LQIGPLKKSC (222 aa)) enclose the B30.2/SPRY domain. Serine 464 carries the phosphoserine modification. Arginine 585 bears the Omega-N-methylarginine mark. At serine 591 the chain carries Phosphoserine.

Belongs to the TRIM/RBCC family. In terms of tissue distribution, expressed in hepatocytes, expression is increased in fatty livers.

The protein resides in the cytoplasm. It is found in the nucleus. The enzyme catalyses S-ubiquitinyl-[E2 ubiquitin-conjugating enzyme]-L-cysteine + [acceptor protein]-L-lysine = [E2 ubiquitin-conjugating enzyme]-L-cysteine + N(6)-ubiquitinyl-[acceptor protein]-L-lysine.. The protein operates within protein modification; protein ubiquitination. In terms of biological role, E3 ubiquitin-protein ligase that mediates the ubiquitination and proteasomal degradation of CYLD. The polypeptide is E3 ubiquitin-protein ligase TRIM47 (Mus musculus (Mouse)).